The sequence spans 204 residues: MLYIISAPSGTGKSSLLQALLRTKRLPLHEIRISISHTTRAMRPGEINGQHYYFISVEEFEKLIDQDAFLEYARVFNHYYGTLRQEVDSILINSVDILLDIDWQGAKQIYAIRKDVRSIFIIPPSKDELHRRLHKRGQDQEEVINQRISQAVAEMIHYTEYDYLIINDDFHTALSDLNTIICAEQLHMNNQKIRYKTLISRLLQ.

A Guanylate kinase-like domain is found at 1-182; it reads MLYIISAPSG…ALSDLNTIIC (182 aa). ATP is bound at residue 7-14; it reads APSGTGKS.

This sequence belongs to the guanylate kinase family.

Its subcellular location is the cytoplasm. The enzyme catalyses GMP + ATP = GDP + ADP. Functionally, essential for recycling GMP and indirectly, cGMP. The polypeptide is Guanylate kinase (Baumannia cicadellinicola subsp. Homalodisca coagulata).